Reading from the N-terminus, the 423-residue chain is Maltooligosaccharide ABC transporter solute-binding lipoprotein (423 aa).

The N-terminal stretch at 1 to 24 (MSSKFMKSAAVLGTATLASLLLVA) is a signal peptide. Cysteine 25 is lipidated: N-palmitoyl cysteine. The S-diacylglycerol cysteine moiety is linked to residue cysteine 25. Substrate contacts are provided by residues tyrosine 52, aspartate 77, aspartate 83, 103-104 (DR), glutamate 148, aspartate 193, asparagine 196, 251-254 (EGAG), tryptophan 274, and lysine 307.

It belongs to the bacterial solute-binding protein 1 family.

The protein localises to the cell membrane. Part of an ABC transporter complex involved in the uptake of maltodextrins. Binds glycogen-derived linear maltooligosaccharides increasing in size from maltotriose to maltooctaose with the highest affinity for maltotriose. Has a very weak affinity for maltose. Has also a very low affinity for maltotetraitol, indicating that the binding is selective for maltooligosaccharides with an intact reducing end. The protein is Maltooligosaccharide ABC transporter solute-binding lipoprotein of Streptococcus pneumoniae serotype 4 (strain ATCC BAA-334 / TIGR4).